The chain runs to 494 residues: 4-hydroxyphenylacetate 3-monooxygenase oxygenase component (494 aa).

Substrate is bound by residues 103–107 (RSPDY) and His149. FAD-binding positions include 149 to 151 (HTL), 155 to 158 (QMNR), and Thr192. 205–206 (ST) is a substrate binding site. 455 to 458 (DPVR) is a binding site for FAD.

This sequence belongs to the FADH(2)-utilizing monooxygenase family. 4-HPA 3-monooxygenase consists of a reductase component HpaI and an oxygenase component HpaH.

It carries out the reaction 4-hydroxyphenylacetate + FADH2 + O2 = 3,4-dihydroxyphenylacetate + FAD + H2O + H(+). Its pathway is aromatic compound metabolism; 4-hydroxyphenylacetate degradation; pyruvate and succinate semialdehyde from 4-hydroxyphenylacetate: step 1/7. In terms of biological role, utilizes FADH(2) supplied by HpaI, to catalyze the hydroxylation of 4-hydroxyphenylacetic acid, leading to the production of 3,4-dihydroxyphenylacetic acid (DHPA). This chain is 4-hydroxyphenylacetate 3-monooxygenase oxygenase component (hpaH), found in Geobacillus sp. (strain PA-9).